The chain runs to 81 residues: Apolipoprotein C-I, acidic form (81 aa).

Positions 1 to 24 (MRLFLSLLVVVLSMVLKGPTPAQG) are cleaved as a signal peptide.

This sequence belongs to the apolipoprotein C1 family.

It is found in the secreted. In Macaca fascicularis (Crab-eating macaque), this protein is Apolipoprotein C-I, acidic form (APOC1A).